The following is a 329-amino-acid chain: Adenylate isopentenyltransferase (329 aa).

Residues 37 to 44, K63, T74, 129 to 131, 220 to 222, and K313 each bind ATP; these read GATGTGKS, SNS, and KAI.

Belongs to the IPP transferase family. The cofactor is Mg(2+). In terms of tissue distribution, expressed in roots, stems, leaves and cones.

The catalysed reaction is dimethylallyl diphosphate + AMP = N(6)-(dimethylallyl)adenosine 5'-phosphate + diphosphate. The enzyme catalyses dimethylallyl diphosphate + ADP = N(6)-(dimethylallyl)adenosine 5'-diphosphate + diphosphate. It catalyses the reaction dimethylallyl diphosphate + ATP = N(6)-(dimethylallyl)adenosine 5'-triphosphate + diphosphate. Functionally, involved in cytokinin biosynthesis. Catalyzes the transfer of an isopentenyl group from dimethylallyl diphosphate (DMAPP) to ATP, ADP and AMP. GMP, IMP, CMP or UMP are not used as substrates. The protein is Adenylate isopentenyltransferase of Humulus lupulus (European hop).